We begin with the raw amino-acid sequence, 291 residues long: Ribose-phosphate pyrophosphokinase (291 aa).

ATP is bound by residues 34-36 (DGE) and 93-94 (RQ). Positions 127 and 165 each coordinate Mg(2+). Lys188 is a catalytic residue. Residues Arg190, Asp216, and 220–224 (STGGT) each bind D-ribose 5-phosphate.

This sequence belongs to the ribose-phosphate pyrophosphokinase family. Class III (archaeal) subfamily. The cofactor is Mg(2+).

It is found in the cytoplasm. It catalyses the reaction D-ribose 5-phosphate + ATP = 5-phospho-alpha-D-ribose 1-diphosphate + AMP + H(+). Its pathway is metabolic intermediate biosynthesis; 5-phospho-alpha-D-ribose 1-diphosphate biosynthesis; 5-phospho-alpha-D-ribose 1-diphosphate from D-ribose 5-phosphate (route I): step 1/1. Involved in the biosynthesis of the central metabolite phospho-alpha-D-ribosyl-1-pyrophosphate (PRPP) via the transfer of pyrophosphoryl group from ATP to 1-hydroxyl of ribose-5-phosphate (Rib-5-P). The chain is Ribose-phosphate pyrophosphokinase from Sulfurisphaera tokodaii (strain DSM 16993 / JCM 10545 / NBRC 100140 / 7) (Sulfolobus tokodaii).